A 150-amino-acid polypeptide reads, in one-letter code: Ribosomal RNA large subunit methyltransferase H (150 aa).

Residues L71, G100, and 118-123 (FSQMTF) each bind S-adenosyl-L-methionine.

This sequence belongs to the RNA methyltransferase RlmH family. As to quaternary structure, homodimer.

Its subcellular location is the cytoplasm. It catalyses the reaction pseudouridine(1915) in 23S rRNA + S-adenosyl-L-methionine = N(3)-methylpseudouridine(1915) in 23S rRNA + S-adenosyl-L-homocysteine + H(+). Its function is as follows. Specifically methylates the pseudouridine at position 1915 (m3Psi1915) in 23S rRNA. This chain is Ribosomal RNA large subunit methyltransferase H, found in Mycoplasmopsis agalactiae (strain NCTC 10123 / CIP 59.7 / PG2) (Mycoplasma agalactiae).